Here is a 124-residue protein sequence, read N- to C-terminus: MSQNPFEALGGGGFDMNALLQQAQQMQEQLQSAQERLTETVVDGTVAGGAVTVKVNGVGELVGVEIRAGGFDGSDPDDLSDLGDMIIAAYRDAKAQADALAGEALGPLAGGAEGLPGMPGQLGF.

The protein belongs to the YbaB/EbfC family. As to quaternary structure, homodimer.

It localises to the cytoplasm. The protein resides in the nucleoid. Binds to DNA and alters its conformation. May be involved in regulation of gene expression, nucleoid organization and DNA protection. This Nocardioides sp. (strain ATCC BAA-499 / JS614) protein is Nucleoid-associated protein Noca_0318.